A 278-amino-acid chain; its full sequence is Elongation factor Ts (278 aa).

Residues 82–85 (TEPV) are involved in Mg(2+) ion dislocation from EF-Tu.

This sequence belongs to the EF-Ts family.

It localises to the cytoplasm. In terms of biological role, associates with the EF-Tu.GDP complex and induces the exchange of GDP to GTP. It remains bound to the aminoacyl-tRNA.EF-Tu.GTP complex up to the GTP hydrolysis stage on the ribosome. The chain is Elongation factor Ts from Cytophaga hutchinsonii (strain ATCC 33406 / DSM 1761 / CIP 103989 / NBRC 15051 / NCIMB 9469 / D465).